A 611-amino-acid chain; its full sequence is Autophagy-related protein 22-2 (611 aa).

Residues 1–24 are disordered; the sequence is MRADDNPSARSLHAQFPGDDTRPT. Residues 35–55 traverse the membrane as a helical segment; the sequence is YGWAAEVFTVCAMGSFLPITL. An N-linked (GlcNAc...) asparagine glycan is attached at Asn78. A run of 3 helical transmembrane segments spans residues 116-136, 151-171, and 175-195; these read TASF…VLII, LLVA…SVVP, and IVGA…FVLL. Asn221 is a glycosylation site (N-linked (GlcNAc...) asparagine). 2 helical membrane passes run 286–306 and 316–336; these read IGIG…VIIA and LVLF…ALWL. N-linked (GlcNAc...) asparagine glycosylation is present at Asn353. 6 helical membrane passes run 380–400, 414–434, 449–469, 483–503, 521–541, and 551–571; these read ILLF…VSGT, AALG…AFSW, IIAC…GFVP, WEMF…SSYC, ALYA…VGLI, and AFVF…LVDV.

The protein belongs to the ATG22 family.

It is found in the vacuole membrane. In terms of biological role, vacuolar effluxer which mediate the efflux of amino acids resulting from autophagic degradation. The release of autophagic amino acids allows the maintenance of protein synthesis and viability during nitrogen starvation. The sequence is that of Autophagy-related protein 22-2 (atg22-2) from Aspergillus clavatus (strain ATCC 1007 / CBS 513.65 / DSM 816 / NCTC 3887 / NRRL 1 / QM 1276 / 107).